A 565-amino-acid chain; its full sequence is Nephrocystin-1 (565 aa).

The span at 1 to 32 shows a compositional bias: acidic residues; sequence GEEEDEEEEEEEESEEGGGEEEESEEEEEEKQ. Disordered regions lie at residues 1-46 and 95-132; these read GEEE…KEYI and VEPY…KQRT. Positions 2 to 48 form a coiled coil; the sequence is EEEDEEEEEEEESEEGGGEEEESEEEEEEKQENESHHQATSKEYIAV. Phosphoserine is present on Ser-14. Residues 40–100 form the SH3 domain; that stretch reads ATSKEYIAVG…PRTYVEPYNK (61 aa). The span at 104–118 shows a compositional bias: acidic residues; sequence QDTSEEEDSEEDVEV. Tyr-182 bears the Phosphotyrosine; by FAK2 mark. The residue at position 554 (Tyr-554) is a Phosphotyrosine; by SRC.

It belongs to the nephrocystin-1 family. In terms of assembly, interacts with Crk-associated substrate BCAR1, NPHP4, PTK2B/PYK2 and tensin. Interacts with INVS and NPHP3. Interacts with AHI1 and TNK2. Interacts with NPHP4 in a complex containing NPHP1, NPHP4 and RPGRIP1L/NPHP8. Interacts with IQCB1; the interaction likely requires additional interactors. Interacts with KIF7. Interacts with ANKS3. Interacts with SPATA7. Interacts with FLNA. Expressed in renal cells (at protein level).

The protein localises to the cell junction. It localises to the adherens junction. It is found in the cell projection. Its subcellular location is the cilium. The protein resides in the cytoplasm. The protein localises to the cytoskeleton. It localises to the cilium axoneme. It is found in the tight junction. Functionally, together with BCAR1 it may play a role in the control of epithelial cell polarity. Involved in the organization of apical junctions in kidney cells together with NPHP4 and RPGRIP1L/NPHP8. Does not seem to be strictly required for ciliogenesis. Seems to help to recruit PTK2B/PYK2 to cell matrix adhesions, thereby initiating phosphorylation of PTK2B/PYK2 and PTK2B/PYK2-dependent signaling. May play a role in the regulation of intraflagellar transport (IFT) during cilia assembly. Required for normal retina development. In connecting photoreceptor cilia influences the movement of some IFT proteins such as IFT88 and WDR19. Involved in spermatogenesis. This is Nephrocystin-1 (NPHP1) from Canis lupus familiaris (Dog).